Consider the following 376-residue polypeptide: Guanine nucleotide-binding protein G(s) subunit alpha (376 aa).

Gly2 carries N-palmitoyl glycine lipidation. Residue Cys3 is the site of S-palmitoyl cysteine attachment. The G-alpha domain occupies 36–376 (GTHRLLLLGA…RMHLRQYELL (341 aa)). The tract at residues 39 to 52 (RLLLLGAGESGKST) is G1 motif. GTP is bound by residues 44-51 (GAGESGKS), 180-186 (LRCRVLT), 205-209 (DVGGQ), 274-277 (NKQD), and Ala348. The Mg(2+) site is built by Ser51 and Thr186. The G2 motif stretch occupies residues 178-186 (DILRCRVLT). Positions 201 to 210 (FHMFDVGGQR) are G3 motif. A G4 motif region spans residues 270–277 (ILFLNKQD). Residues 346 to 351 (TCAVDT) form a G5 motif region.

It belongs to the G-alpha family. G(s) subfamily. As to quaternary structure, g proteins are composed of 3 units; alpha, beta and gamma. The alpha chain contains the guanine nucleotide binding site.

Guanine nucleotide-binding proteins (G proteins) are involved as modulators or transducers in various transmembrane signaling systems. The G(s) protein is involved in hormonal regulation of adenylate cyclase: it activates the cyclase in response to beta-adrenergic stimuli. This Lymnaea stagnalis (Great pond snail) protein is Guanine nucleotide-binding protein G(s) subunit alpha.